We begin with the raw amino-acid sequence, 735 residues long: Stonin-1 (735 aa).

Residues M1–C35 are disordered. The region spanning G275–K408 is the SHD domain. The MHD domain occupies E412–E715.

This sequence belongs to the Stoned B family. In terms of tissue distribution, ubiquitous.

The protein localises to the cytoplasm. The protein resides in the membrane. In terms of biological role, may be involved in the endocytic machinery. This Homo sapiens (Human) protein is Stonin-1 (STON1).